The following is a 257-amino-acid chain: uncharacterized protein (257 aa).

The next 6 membrane-spanning stretches (helical) occupy residues 23–43, 79–99, 131–151, 158–178, 199–219, and 221–241; these read VLTD…EGLL, FIFI…VLGA, TFGI…AFSV, FAVS…ILMM, AFVL…HYEM, and HSVF…IHYI.

The protein belongs to the TerC family.

It localises to the cell membrane. This is an uncharacterized protein from Bacillus subtilis (strain 168).